We begin with the raw amino-acid sequence, 1203 residues long: MSFVAPQRGIVTDRVGRNVGNMPNKTSIKPLMREIGRMLVKGNLNGKGPITSETDWETLLNKSGAYNKLFVVSTLMGEGADVANTSDNVRLSYSSTSHNTPLYNEFVQTIVRPAAPMRGGVIEDTTSMITMMREYDKVEPTCMTTLPEIAVDLINKARLNILNENNGYVSESTLSDPTLDAQRRETAMAALQQINAGFSGNVSKMQLALMASIPEQSQAAIEAESIPYELAQVTNELSASIVQNTAQGSIDPIGELRDANHTRSYYEEVASRSLENLFGVSKSVTKGTMGAFFSELMRTNRDFMTNLTTSDNTASGVVVMPADGQPQLPILGTLTVTEDMLPILKPLLARGRRVGAVPLDFHDTTDYYRQYGREMVRYKEEQNRIPTTGAALELLNVVDERNPNVDGSLNKIAPGGNEIFGRKDVDKERDFETNVEAVRSLPVNKDVIYITTQIGTDAEGAIVLNVKREDAMKRSYDLYSDKSASGLKTMHTLMRATVGDNDYKQIMPGAKIFADRMEKKDPGSINAIGKYGTKPVTAHTPDVSTIHHIFGPEEFKLAFLDPSLYDRVGLTERLNDFIKDAERGGSTMGELREMVSNIVTTWKNKVRYASEYYNSAGNNRAEELVSIELSPFFEVAPEGKSASRALFGDIPAWAHNINDHVLTAAMLTPSNYVDEGGLKKIVDDAVKAYKDLERKDTMELVTTLSDPVGEEVKIPDAIGKLADELIKIGKEMYSGMANVDKCIKLDKEIVLSHVVFPMLGGFEFIAQKGAKQKFIVNKAKDGHLLWENNDGVKTYMSFIFAGNAYTILNKMGITSTTTKGLSLLAMLRKTDPIGVAATIAKTYPFGLSADFYRLERMFCNEMILAPPKAIDVIVAPKPVKVTKMGDGSLNFVSSTQLNYVSNMSTATGLRVSNAIAKVRTDNIANMNAKPVIAMDFVTVSEYGNLDRMVDSIATANNIDTDEAKFIKSNLERYEEYRINDFGANQATRMTESYVPLIRPSRQLEPGLLPFLGMARHEALVGPSNGNGFTNFYGKLVTVNPFISNLGSVYQQRFHSSAQTISFDGTHMRFRTSNVNNEGTISETTKLFEEAMVFENLHLIDEQDRRSINKFITFRKGDDSKIIEATKDKLGRLDHREGNLMTRRHLLSTLGYSIPHTQYNSEDLLSIAKEKKKNVMAADGYFTILSPARKDYLGEPTPLFQYLR.

This is an uncharacterized protein from Magallana gigas (Pacific oyster).